Reading from the N-terminus, the 495-residue chain is Leucine aminopeptidase 2 (495 aa).

The first 21 residues, 1–21 (MKSQLLSLAVAVSTISQGVVG), serve as a signal peptide directing secretion. Residues 124–218 (PPANKIMAEL…EDGKNLASLV (95 aa)) enclose the PA domain. N-linked (GlcNAc...) asparagine glycans are attached at residues asparagine 142 and asparagine 235. 2 residues coordinate Zn(2+): histidine 259 and aspartate 271. Asparagine 272 is a glycosylation site (N-linked (GlcNAc...) asparagine). Glutamate 303 serves as the catalytic Proton acceptor. Positions 304 and 332 each coordinate Zn(2+). N-linked (GlcNAc...) asparagine glycosylation is present at asparagine 352. Histidine 430 contacts Zn(2+).

The protein belongs to the peptidase M28 family. M28A subfamily. Monomer. Zn(2+) is required as a cofactor.

It is found in the secreted. Functionally, extracellular aminopeptidase that releases a wide variety of amino acids from natural peptides and contributes to pathogenicity. The chain is Leucine aminopeptidase 2 (LAP2) from Trichophyton equinum (Horse ringworm fungus).